Consider the following 336-residue polypeptide: Holliday junction branch migration complex subunit RuvB (336 aa).

Positions 1 to 11 (MDDDKLLSGDK) are enriched in basic and acidic residues. The interval 1-21 (MDDDKLLSGDKADDEEASLEK) is disordered. The large ATPase domain (RuvB-L) stretch occupies residues 1–184 (MDDDKLLSGD…FGIVEHMAYY (184 aa)). ATP contacts are provided by residues L23, R24, G65, K68, T69, T70, 131–133 (EDF), R174, Y184, and R221. Residue T69 coordinates Mg(2+). The tract at residues 185–255 (EVADLEDIVK…IVARSLTYLR (71 aa)) is small ATPAse domain (RuvB-S). The tract at residues 258 to 336 (DAGLDETDNK…HLGFPYPENK (79 aa)) is head domain (RuvB-H). DNA contacts are provided by R313 and R318.

Belongs to the RuvB family. As to quaternary structure, homohexamer. Forms an RuvA(8)-RuvB(12)-Holliday junction (HJ) complex. HJ DNA is sandwiched between 2 RuvA tetramers; dsDNA enters through RuvA and exits via RuvB. An RuvB hexamer assembles on each DNA strand where it exits the tetramer. Each RuvB hexamer is contacted by two RuvA subunits (via domain III) on 2 adjacent RuvB subunits; this complex drives branch migration. In the full resolvosome a probable DNA-RuvA(4)-RuvB(12)-RuvC(2) complex forms which resolves the HJ.

It localises to the cytoplasm. The catalysed reaction is ATP + H2O = ADP + phosphate + H(+). Functionally, the RuvA-RuvB-RuvC complex processes Holliday junction (HJ) DNA during genetic recombination and DNA repair, while the RuvA-RuvB complex plays an important role in the rescue of blocked DNA replication forks via replication fork reversal (RFR). RuvA specifically binds to HJ cruciform DNA, conferring on it an open structure. The RuvB hexamer acts as an ATP-dependent pump, pulling dsDNA into and through the RuvAB complex. RuvB forms 2 homohexamers on either side of HJ DNA bound by 1 or 2 RuvA tetramers; 4 subunits per hexamer contact DNA at a time. Coordinated motions by a converter formed by DNA-disengaged RuvB subunits stimulates ATP hydrolysis and nucleotide exchange. Immobilization of the converter enables RuvB to convert the ATP-contained energy into a lever motion, pulling 2 nucleotides of DNA out of the RuvA tetramer per ATP hydrolyzed, thus driving DNA branch migration. The RuvB motors rotate together with the DNA substrate, which together with the progressing nucleotide cycle form the mechanistic basis for DNA recombination by continuous HJ branch migration. Branch migration allows RuvC to scan DNA until it finds its consensus sequence, where it cleaves and resolves cruciform DNA. This is Holliday junction branch migration complex subunit RuvB from Lactiplantibacillus plantarum (strain ATCC BAA-793 / NCIMB 8826 / WCFS1) (Lactobacillus plantarum).